The following is a 160-amino-acid chain: Putative 4-hydroxy-4-methyl-2-oxoglutarate aldolase (160 aa).

Substrate is bound by residues Gly-76–Ile-79 and Arg-98. Position 99 (Asp-99) interacts with a divalent metal cation.

Belongs to the class II aldolase/RraA-like family. As to quaternary structure, homotrimer. The cofactor is a divalent metal cation.

It catalyses the reaction 4-hydroxy-4-methyl-2-oxoglutarate = 2 pyruvate. The enzyme catalyses oxaloacetate + H(+) = pyruvate + CO2. In terms of biological role, catalyzes the aldol cleavage of 4-hydroxy-4-methyl-2-oxoglutarate (HMG) into 2 molecules of pyruvate. Also contains a secondary oxaloacetate (OAA) decarboxylase activity due to the common pyruvate enolate transition state formed following C-C bond cleavage in the retro-aldol and decarboxylation reactions. The chain is Putative 4-hydroxy-4-methyl-2-oxoglutarate aldolase from Alcanivorax borkumensis (strain ATCC 700651 / DSM 11573 / NCIMB 13689 / SK2).